Consider the following 309-residue polypeptide: MPRHCSAAGCCTRDTRETRNRGISFHRLPKKDNPRRGLWLANCQRLDPSGQGLWDPASEYIYFCSKHFEEDCFELVGISGYHRLKEGAVPTIFESFSKLRRTTKTKGHSYPPGPAEVSRLRRCRKRCSEGRGPTTPFSPPPPADVTCFPVEEASAPATLPASPAGRLEPGLSSPFSDLLGPLGAQADEAGCSAQPSPERQPSPLEPRPVSPSAYMLRLPPPAGAYIQNEHSYQVGSALLWKRRAEAALDALDKAQRQLQACKRREQRLRLRLTKLQQERAREKRAQADARQTLKEHVQDFAMQLSSSMA.

The THAP-type zinc finger occupies 1 to 93; it reads MPRHCSAAGC…LKEGAVPTIF (93 aa). A disordered region spans residues 158 to 209; it reads TLPASPAGRLEPGLSSPFSDLLGPLGAQADEAGCSAQPSPERQPSPLEPRPV. Serine 162 carries the phosphoserine modification. Over residues 198 to 209 the composition is skewed to pro residues; sequence ERQPSPLEPRPV. Residue serine 210 is modified to Phosphoserine. The HCFC1-binding motif (HBM) signature appears at 229 to 232; sequence EHSY.

Forms homodimers. Interacts with HDAC3 and nuclear hormone receptor corepressors. Interacts via HBM with HCFC1.

The protein localises to the nucleus. The protein resides in the chromosome. In terms of biological role, chromatin-associated, histone tail-binding protein that represses transcription via recruitment of HDAC3 and nuclear hormone receptor corepressors. The chain is THAP domain-containing protein 7 (THAP7) from Homo sapiens (Human).